The sequence spans 231 residues: Ribonuclease 3 (231 aa).

The region spanning Q5–G134 is the RNase III domain. A Mg(2+)-binding site is contributed by E47. Residue D51 is part of the active site. The Mg(2+) site is built by D120 and E123. E123 is a catalytic residue. The 71-residue stretch at D160 to P230 folds into the DRBM domain.

Belongs to the ribonuclease III family. As to quaternary structure, homodimer. It depends on Mg(2+) as a cofactor.

Its subcellular location is the cytoplasm. It carries out the reaction Endonucleolytic cleavage to 5'-phosphomonoester.. Functionally, digests double-stranded RNA. Involved in the processing of primary rRNA transcript to yield the immediate precursors to the large and small rRNAs (23S and 16S). Processes some mRNAs, and tRNAs when they are encoded in the rRNA operon. Processes pre-crRNA and tracrRNA of type II CRISPR loci if present in the organism. In Oenococcus oeni (strain ATCC BAA-331 / PSU-1), this protein is Ribonuclease 3.